The sequence spans 337 residues: Dihydroorotate dehydrogenase (quinone) (337 aa).

FMN-binding positions include 62 to 66 (AGLDK) and Thr-86. Lys-66 is a binding site for substrate. Substrate is bound at residue 111-115 (NRMGF). FMN contacts are provided by Asn-140 and Asn-173. Asn-173 contributes to the substrate binding site. The Nucleophile role is filled by Ser-176. Asn-178 serves as a coordination point for substrate. FMN contacts are provided by Lys-218 and Thr-246. 247–248 (NT) contacts substrate. FMN contacts are provided by residues Gly-269, Gly-298, and 319–320 (YS).

It belongs to the dihydroorotate dehydrogenase family. Type 2 subfamily. As to quaternary structure, monomer. The cofactor is FMN.

The protein resides in the cell membrane. It catalyses the reaction (S)-dihydroorotate + a quinone = orotate + a quinol. The protein operates within pyrimidine metabolism; UMP biosynthesis via de novo pathway; orotate from (S)-dihydroorotate (quinone route): step 1/1. Its function is as follows. Catalyzes the conversion of dihydroorotate to orotate with quinone as electron acceptor. In Wigglesworthia glossinidia brevipalpis, this protein is Dihydroorotate dehydrogenase (quinone).